We begin with the raw amino-acid sequence, 221 residues long: Probable septum site-determining protein MinC (221 aa).

It belongs to the MinC family. In terms of assembly, interacts with MinD and FtsZ.

Cell division inhibitor that blocks the formation of polar Z ring septums. Rapidly oscillates between the poles of the cell to destabilize FtsZ filaments that have formed before they mature into polar Z rings. Prevents FtsZ polymerization. The sequence is that of Probable septum site-determining protein MinC from Shewanella sp. (strain MR-7).